Reading from the N-terminus, the 225-residue chain is Paired immunoglobulin-like type 2 receptor beta-2 (225 aa).

The N-terminal stretch at 1-31 (MALLISLPGETPAMAQILLLLSSACLHAGNS) is a signal peptide. Residues 32 to 195 (ARSNGGNDFG…NPSLMNLGAM (164 aa)) are Extracellular-facing. N-linked (GlcNAc...) asparagine glycans are attached at residues asparagine 90, asparagine 107, and asparagine 160. Residues 196–216 (VTMLLAKVVVIILVYGWMIFL) traverse the membrane as a helical segment. Topologically, residues 217–225 (RWKQRPDPA) are cytoplasmic.

The protein resides in the membrane. Its function is as follows. Paired receptors consist of highly related activating and inhibitory receptors and are widely involved in the regulation of the immune system. PILRB2 is probably a cellular signaling activating receptor that associates with ITAM-bearing adapter molecules on the cell surface. The sequence is that of Paired immunoglobulin-like type 2 receptor beta-2 (Pilrb2) from Mus musculus (Mouse).